The following is a 417-amino-acid chain: Inhibitor of growth protein 3 (417 aa).

Disordered regions lie at residues 128-203 (TPSQ…YNTN) and 286-320 (QTLS…SSSS). Residues 136-152 (HHAHSHTPVEKRKHNPS) are compositionally biased toward basic residues. Positions 156–168 (GATDHVPEKKFKS) are enriched in basic and acidic residues. Composition is skewed to low complexity over residues 189–203 (NNNS…YNTN), 286–295 (QTLSSSSTDS), and 307–320 (SSSQ…SSSS). The PHD-type zinc finger occupies 359–408 (PRYCICNQVSYGEMVGCDNQDCPIEWFHYGCVGLTEAPKGKWYCPQCTAA). The Zn(2+) site is built by C362, C364, C375, C380, H386, C389, C402, and C405.

Belongs to the ING family. As to quaternary structure, interacts with H3K4me3 and to a lesser extent with H3K4me2. Component of the NuA4 histone acetyltransferase complex.

The protein localises to the nucleus. Its function is as follows. Component of the NuA4 histone acetyltransferase (HAT) complex which is involved in transcriptional activation of select genes principally by acetylation of nucleosomal histone H4 and H2A. This modification may both alter nucleosome - DNA interactions and promote interaction of the modified histones with other proteins which positively regulate transcription. NuA4 may also play a direct role in DNA repair when directly recruited to sites of DNA damage. This chain is Inhibitor of growth protein 3 (ING3), found in Gallus gallus (Chicken).